We begin with the raw amino-acid sequence, 511 residues long: Cytochrome P450 93B2 (511 aa).

The helical transmembrane segment at L4–Y24 threads the bilayer. C447 contacts heme.

It belongs to the cytochrome P450 family. It depends on heme as a cofactor.

The protein localises to the membrane. It catalyses the reaction a flavanone + reduced [NADPH--hemoprotein reductase] + O2 = a flavone + oxidized [NADPH--hemoprotein reductase] + 2 H2O + H(+). Its pathway is secondary metabolite biosynthesis; flavonoid biosynthesis. Functionally, functions as a flavone synthase II (FNSII) that catalyzes the direct conversion of flavanones to flavones. In vitro, can convert liquiritigenin, naringenin and eriodictyol to 7,4'-dihydroxyflavone, apigenin and luteolin, respectively. The chain is Cytochrome P450 93B2 from Gerbera hybrida (Daisy).